A 449-amino-acid polypeptide reads, in one-letter code: Tubulin beta chain (449 aa).

Q11, E71, S140, G144, T145, G146, N206, and N228 together coordinate GTP. A Mg(2+)-binding site is contributed by E71.

This sequence belongs to the tubulin family. In terms of assembly, dimer of alpha and beta chains. A typical microtubule is a hollow water-filled tube with an outer diameter of 25 nm and an inner diameter of 15 nM. Alpha-beta heterodimers associate head-to-tail to form protofilaments running lengthwise along the microtubule wall with the beta-tubulin subunit facing the microtubule plus end conferring a structural polarity. Microtubules usually have 13 protofilaments but different protofilament numbers can be found in some organisms and specialized cells. The cofactor is Mg(2+).

The protein resides in the cytoplasm. Its subcellular location is the cytoskeleton. Tubulin is the major constituent of microtubules, a cylinder consisting of laterally associated linear protofilaments composed of alpha- and beta-tubulin heterodimers. Microtubules grow by the addition of GTP-tubulin dimers to the microtubule end, where a stabilizing cap forms. Below the cap, tubulin dimers are in GDP-bound state, owing to GTPase activity of alpha-tubulin. The sequence is that of Tubulin beta chain (TUBB) from Cicer arietinum (Chickpea).